The primary structure comprises 1048 residues: [F-actin]-monooxygenase MICAL1 (1048 aa).

The tract at residues 1–489 is monooxygenase domain; that stretch reads MASPASTNPA…QDLYDMMDKE (489 aa). Residues cysteine 95, 114–116, 121–123, phenylalanine 181, tyrosine 293, and aspartate 393 contribute to the FAD site; these read EKR and RHN. Threonine 475 bears the Phosphothreonine mark. Over residues 488–502 the composition is skewed to basic and acidic residues; sequence KEHAQRKSDEPDSRK. Positions 488-508 are disordered; that stretch reads KEHAQRKSDEPDSRKTTTGSA. The region spanning 507–611 is the Calponin-homology (CH) domain; it reads SAGTEELLHW…YLSHFHSAFK (105 aa). Serine 616 carries the post-translational modification Phosphoserine. Residues 643-676 form a disordered region; it reads TRAKVDEETPSTEEPPVSEPSMSPNTPELSEHQE. Residues 654-666 show a composition bias toward low complexity; it reads TEEPPVSEPSMSP. The region spanning 681-743 is the LIM zinc-binding domain; that stretch reads ELCELCGKHL…LQHLPQEDQK (63 aa). Residues cysteine 683, cysteine 686, histidine 704, cysteine 707, cysteine 710, cysteine 713, cysteine 733, and histidine 736 each contribute to the Zn(2+) site. Disordered regions lie at residues 741–787, 805–825, and 839–873; these read DQKE…QPAR, IIPD…SDLA, and PVQA…PPLE. Residues 747 to 765 show a composition bias toward polar residues; it reads NNGSLESQELPTPGDSNMQ. Positions 772–787 are enriched in low complexity; the sequence is PVTRVSPVPSPSQPAR. 2 positions are modified to phosphoserine: serine 777 and serine 781. Coiled coils occupy residues 847 to 867, 906 to 949, and 974 to 1031; these read EAIE…EEEE, EEEM…ESSS, and EEAE…VNQR. Over residues 852–868 the composition is skewed to acidic residues; it reads GDDEEEEEEEEEEEEEP. Residues 905-1048 enclose the bMERB domain; the sequence is KEEEMKRFCK…EERRLREMPA (144 aa).

It belongs to the Mical family. Associates with the SH3 domain of NEDD9. Interacts with VIM and PLXNA3. Interacts with RAB1B, RAB8A, RAB10, RAB13 and RAB15 (in their GTP-bound forms); binding to RAB1B is of low affinity compared to other Rab proteins; at least in case of RAB8A and RAB10 can bind 2 molecules of the Rab proteins simultaneously. Interacts with STK38 and STK38L. Interacts with GRAF1/ARHGAP26, GRAF2/ARHGAP10, RAB8A, RAB8B and RAB10; may bind simultaneously to GRAFs and Rabs and connects GRAFs to Rabs. Does not interact with RAB1 and RAB11A. It depends on FAD as a cofactor. Expressed in the postnatal and adult hippocampus; found in dentate gyrus, the polymorphic layer, cornu ammonis (CA) 1-3 and in mossy fibers of the striatum lucidum. In adult hippocampus strongly expressed in CA3 pyramidial neurons.

It localises to the cytoplasm. It is found in the cytoskeleton. Its subcellular location is the endosome membrane. The protein resides in the midbody. It carries out the reaction L-methionyl-[F-actin] + NADPH + O2 + H(+) = L-methionyl-(R)-S-oxide-[F-actin] + NADP(+) + H2O. The catalysed reaction is NADPH + O2 + H(+) = H2O2 + NADP(+). Its function is as follows. Monooxygenase that promotes depolymerization of F-actin by mediating oxidation of specific methionine residues on actin to form methionine-sulfoxide, resulting in actin filament disassembly and preventing repolymerization. In the absence of actin, it also functions as a NADPH oxidase producing H(2)O(2). Acts as a cytoskeletal regulator that connects NEDD9 to intermediate filaments. Also acts as a negative regulator of apoptosis via its interaction with STK38 and STK38L; acts by antagonizing STK38 and STK38L activation by MST1/STK4. Involved in regulation of lamina-specific connectivity in the nervous system such as the development of lamina-restricted hippocampal connections. Through redox regulation of the actin cytoskeleton controls the intracellular distribution of secretory vesicles containing L1/neurofascin/NgCAM family proteins in neurons, thereby regulating their cell surface levels. May act as Rab effector protein and play a role in vesicle trafficking. Promotes endosomal tubule extension by associating with RAB8 (RAB8A or RAB8B), RAB10 and GRAF (GRAF1/ARHGAP26 or GRAF2/ARHGAP10) on the endosomal membrane which may connect GRAFs to Rabs, thereby participating in neosynthesized Rab8-Rab10-Rab11-dependent protein export. In Mus musculus (Mouse), this protein is [F-actin]-monooxygenase MICAL1 (Mical1).